Here is a 250-residue protein sequence, read N- to C-terminus: 3-deoxy-manno-octulosonate cytidylyltransferase (250 aa).

It belongs to the KdsB family.

It is found in the cytoplasm. It carries out the reaction 3-deoxy-alpha-D-manno-oct-2-ulosonate + CTP = CMP-3-deoxy-beta-D-manno-octulosonate + diphosphate. The protein operates within nucleotide-sugar biosynthesis; CMP-3-deoxy-D-manno-octulosonate biosynthesis; CMP-3-deoxy-D-manno-octulosonate from 3-deoxy-D-manno-octulosonate and CTP: step 1/1. It participates in bacterial outer membrane biogenesis; lipopolysaccharide biosynthesis. In terms of biological role, activates KDO (a required 8-carbon sugar) for incorporation into bacterial lipopolysaccharide in Gram-negative bacteria. The chain is 3-deoxy-manno-octulosonate cytidylyltransferase from Syntrophobacter fumaroxidans (strain DSM 10017 / MPOB).